Here is a 197-residue protein sequence, read N- to C-terminus: Glycerol-3-phosphate acyltransferase (197 aa).

5 helical membrane passes run 2-22 (LDVI…AIVV), 53-73 (AGIT…LAWL), 78-98 (PVVA…PVYF), 112-132 (VILA…LAVA), and 152-174 (YMLW…AAIV).

Belongs to the PlsY family. In terms of assembly, probably interacts with PlsX.

The protein resides in the cell inner membrane. The catalysed reaction is an acyl phosphate + sn-glycerol 3-phosphate = a 1-acyl-sn-glycero-3-phosphate + phosphate. Its pathway is lipid metabolism; phospholipid metabolism. Its function is as follows. Catalyzes the transfer of an acyl group from acyl-phosphate (acyl-PO(4)) to glycerol-3-phosphate (G3P) to form lysophosphatidic acid (LPA). This enzyme utilizes acyl-phosphate as fatty acyl donor, but not acyl-CoA or acyl-ACP. In Halorhodospira halophila (strain DSM 244 / SL1) (Ectothiorhodospira halophila (strain DSM 244 / SL1)), this protein is Glycerol-3-phosphate acyltransferase.